The following is a 228-amino-acid chain: D-lyxose/D-mannose isomerase (228 aa).

His103, His105, Glu110, and His171 together coordinate Mn(2+).

This sequence belongs to the D-lyxose ketol-isomerase family. In terms of assembly, homodimer. Mn(2+) is required as a cofactor.

The catalysed reaction is D-lyxose = D-xylulose. The enzyme catalyses D-mannose = D-fructose. Sugar isomerase that catalyzes the reversible isomerization of D-lyxose to D-xylulose, and D-mannose to D-fructose. Shows optimum activity using D-lyxose as substrate, but can also effectively catalyze the isomerization between D-fructose and D-mannose. Shows lower activity with L-gulose, D-talose and L-ribose. The polypeptide is D-lyxose/D-mannose isomerase (Serratia proteamaculans).